We begin with the raw amino-acid sequence, 166 residues long: Cytochrome c-type biogenesis protein CcmE (166 aa).

The Cytoplasmic portion of the chain corresponds to 1-8; that stretch reads MNAVRRKK. The helical; Signal-anchor for type II membrane protein transmembrane segment at 9–29 threads the bilayer; that stretch reads LMWVMFTLAGAVIAVALVIYA. Residues 30 to 166 lie on the Periplasmic side of the membrane; the sequence is IGKQTDYYFD…KLHETKTLQQ (137 aa). 2 residues coordinate heme: His-124 and Tyr-128. The disordered stretch occupies residues 133-166; it reads VAKSMKENNRSGAVPSSEQYNPAEKLHETKTLQQ. Residues 142–152 show a composition bias toward polar residues; sequence RSGAVPSSEQY. Basic and acidic residues predominate over residues 156–166; that stretch reads EKLHETKTLQQ.

This sequence belongs to the CcmE/CycJ family.

It is found in the cell inner membrane. Heme chaperone required for the biogenesis of c-type cytochromes. Transiently binds heme delivered by CcmC and transfers the heme to apo-cytochromes in a process facilitated by CcmF and CcmH. The protein is Cytochrome c-type biogenesis protein CcmE of Psychrobacter arcticus (strain DSM 17307 / VKM B-2377 / 273-4).